The primary structure comprises 479 residues: MESSKPKNRNPMKKPVSITMEHVLLALRETMDEREIRIRSLFDFFDNSNLGFLDYAQIEKGLASLQIPPEYKYARDLFRVCDANRDGRVDYQEFRRYIDAKELELYRIFQAIDVEHNGCILPEELWEALVKAGIEIDDEELARFVEHVDKDNNGTITFEEWRDFLLLYPHEATLENIYHHWERVCLIDIGEQAVIPDGISKHVKRSRLLLAGGLAGAVSRTATAPLDRLKVVLQVQRAHAGVLPTIKKIWREDKLMGFFRGNGLNVMKVAPESAIKFCAYEMLKPMIGGEDGDIGTSGRLMAGGMAGALAQTAIYPMDLVKTRLQTCVSEGGKAPKLWKLTKDIWVREGPRAFYKGLFPSLLGIVPYAGIDLAAYETLKDLSRTYILQDTEPGPLIQLSCGMTSGALGASCVYPLQVVRTRMQADSSKTTMKQEFMNTMKGEGLRGFYRGLLPNLLKVVPAASITYIVYEAMKKNMALD.

The Mitochondrial intermembrane segment spans residues 1-208 (MESSKPKNRN…ISKHVKRSRL (208 aa)). EF-hand domains lie at 33 to 68 (EREIRIRSLFDFFDNSNLGFLDYAQIEKGLASLQIP), 69 to 104 (PEYKYARDLFRVCDANRDGRVDYQEFRRYIDAKELE), 105 to 135 (LYRIFQAIDVEHNGCILPEELWEALVKAGIE), and 136 to 171 (IDDEELARFVEHVDKDNNGTITFEEWRDFLLLYPHE). Residues Asp82, Asn84, Asp86, Arg88, and Glu93 each coordinate Ca(2+). 5 residues coordinate Ca(2+): Asp149, Asp151, Asn153, Thr155, and Glu160. 3 Solcar repeats span residues 203–286 (VKRS…LKPM), 294–381 (IGTS…LKDL), and 392–475 (PGPL…MKKN). Residues 209-226 (LLAGGLAGAVSRTATAPL) form a helical membrane-spanning segment. Over 227 to 260 (DRLKVVLQVQRAHAGVLPTIKKIWREDKLMGFFR) the chain is Mitochondrial matrix. Residues 261-280 (GNGLNVMKVAPESAIKFCAY) traverse the membrane as a helical segment. At 281 to 303 (EMLKPMIGGEDGDIGTSGRLMAG) the chain is on the mitochondrial intermembrane side. The helical transmembrane segment at 304–317 (GMAGALAQTAIYPM) threads the bilayer. The Mitochondrial matrix portion of the chain corresponds to 318–355 (DLVKTRLQTCVSEGGKAPKLWKLTKDIWVREGPRAFYK). The helical transmembrane segment at 356–375 (GLFPSLLGIVPYAGIDLAAY) threads the bilayer. Over 376–397 (ETLKDLSRTYILQDTEPGPLIQ) the chain is Mitochondrial intermembrane. The helical transmembrane segment at 398–415 (LSCGMTSGALGASCVYPL) threads the bilayer. At 416 to 449 (QVVRTRMQADSSKTTMKQEFMNTMKGEGLRGFYR) the chain is on the mitochondrial matrix side. Residues 450–469 (GLLPNLLKVVPAASITYIVY) form a helical membrane-spanning segment. At 470–479 (EAMKKNMALD) the chain is on the mitochondrial intermembrane side.

It belongs to the mitochondrial carrier (TC 2.A.29) family. Expressed in flowers, leaves, stems, roots and seedlings, mostly in seedlings.

The protein resides in the mitochondrion inner membrane. With respect to regulation, counter-exchange transport activity is saturable and inhibited by pyridoxal-5'-phosphate, EDTA and EGTA. Activated by calcium Ca(2+) and manganese Mn(2+) ions, and slightly by iron Fe(2+) and zinc Zn(2+) ions. Repressed by copper ions Cu(2+) and slightly by magnesium Mg(2+) ions. Magnesium Mg(2+) ions promotes slightly ATP uptake, ATP-Mg(2+) being exchanged with ATP(4-). Calcium-dependent mitochondrial carrier protein that catalyzes the import of ATP co-transported with metal divalent cations across the mitochondrial inner membrane in exchange for phosphate (Pi). Can transport phosphate, AMP, ADP, ATP, adenosine 5'-phosphosulfate, sulfate and thiosulfate, and, to a lesser extent, other nucleotides. Binds calcium ions Ca(2+). Also mediates calcium uptake. The chain is Calcium-dependent mitochondrial ATP-magnesium/phosphate carrier protein 3 from Arabidopsis thaliana (Mouse-ear cress).